The primary structure comprises 749 residues: Triacylglycerol lipase 5 (749 aa).

The HXXXXD acyltransferase motif motif lies at 54–59 (HAISYD). Positions 183 to 388 (LVLSGGSTFG…DNDMPISRLS (206 aa)) constitute a PNPLA domain. Residues 214–218 (GSSAG) carry the GXSXG motif. The Nucleophile role is filled by serine 216. Asparagine 270, asparagine 289, asparagine 297, asparagine 304, and asparagine 321 each carry an N-linked (GlcNAc...) asparagine glycan. Aspartate 375 (proton acceptor) is an active-site residue. N-linked (GlcNAc...) asparagine glycosylation is found at asparagine 474 and asparagine 589. Residues 585–643 (IKSPNKTAAPGRFPLQPLPSPSSTFNKRKMDMLSPSPSPSTSPQRSKSSFTQQGTRQKA) form a disordered region. Residues 623–633 (PSTSPQRSKSS) show a composition bias toward low complexity. Positions 634–643 (FTQQGTRQKA) are enriched in polar residues. Position 645 is a phosphoserine (serine 645). Asparagine 680, asparagine 714, and asparagine 742 each carry an N-linked (GlcNAc...) asparagine glycan.

The protein localises to the lipid droplet. The catalysed reaction is a triacylglycerol + H2O = a diacylglycerol + a fatty acid + H(+). The enzyme catalyses 1-(9Z-octadecenoyl)-sn-glycero-3-phosphate + (9Z)-octadecenoyl-CoA = 1,2-di-(9Z-octadecenoyl)-sn-glycero-3-phosphate + CoA. It catalyses the reaction 1-(9Z-octadecenoyl)-sn-glycero-3-phosphate + hexadecanoyl-CoA = 1-hexadecanoyl-2-(9Z-octadecenoyl)-sn-glycero-3-phosphate + CoA. Loses its lipolytic activity in cells lacking nonpolar lipids, but retains its side activity as lysophospholipid acyltransferase. In terms of biological role, lipid particle-localized triacylglycerol (TAG) lipase. The lipid droplet/particle is a lipid storage compartment which serves as a depot of energy and building blocks for membrane lipid biosynthesis. Involved in the mobilization of the non-polar storage lipids triacylglycerols (TAGs) from lipid particles by hydrolysis of TAGs, releasing and supplying specific fatty acids to the appropriate metabolic pathways. Also catalyzes the acylation of lysophosphatidic acid (LPA). The polypeptide is Triacylglycerol lipase 5 (TGL5) (Saccharomyces cerevisiae (strain ATCC 204508 / S288c) (Baker's yeast)).